The chain runs to 63 residues: Prokaryotic ubiquitin-like protein UBact (63 aa).

Positions 1–63 (MSGRSTFGRF…SRRYRQRTGE (63 aa)) are disordered. Residues 17–50 (PWERKPGDDEGGPKRPKVERPDTNDLLKRMRRVD) are compositionally biased toward basic and acidic residues. E63 participates in a covalent cross-link: Isoglutamyl lysine isopeptide (Glu-Lys) (interchain with K-? in acceptor proteins).

This sequence belongs to the ubiquitin-like protein UBact family.

Its function is as follows. May function as a protein modifier covalently attached to lysine residues of substrate proteins. This may serve to target the modified proteins for degradation by proteasomes. The protein is Prokaryotic ubiquitin-like protein UBact of Handelsmanbacteria sp. (strain RIFCSPLOWO2_12_FULL_64_10).